Here is a 233-residue protein sequence, read N- to C-terminus: Small ribosomal subunit protein uS3 (233 aa).

Residues 39–107 (IRAFLKRKLY…DVNINIKEER (69 aa)) form the KH type-2 domain. Residues 212–222 (MQPEKTEESAP) show a composition bias toward basic and acidic residues. The tract at residues 212–233 (MQPEKTEESAPAKKSRRTRRGK) is disordered. A compositionally biased stretch (basic residues) spans 224-233 (KKSRRTRRGK).

It belongs to the universal ribosomal protein uS3 family. In terms of assembly, part of the 30S ribosomal subunit. Forms a tight complex with proteins S10 and S14.

Its function is as follows. Binds the lower part of the 30S subunit head. Binds mRNA in the 70S ribosome, positioning it for translation. This is Small ribosomal subunit protein uS3 from Campylobacter jejuni subsp. doylei (strain ATCC BAA-1458 / RM4099 / 269.97).